Consider the following 160-residue polypeptide: Globin CTT-Y (160 aa).

Residues 1–16 (MKVLAIFALCIIGALA) form the signal peptide. Residues 17-160 (TPCDDFKIMQ…IRKVINANLE (144 aa)) form the Globin domain. The heme b site is built by His-74 and His-109.

This sequence belongs to the globin family.

This Chironomus thummi piger (Midge) protein is Globin CTT-Y (CTT-Y).